We begin with the raw amino-acid sequence, 217 residues long: Large ribosomal subunit protein uL4 (217 aa).

Residues 46–102 form a disordered region; sequence KRQGTHSAKTRAEVSGGGRKPFRQKGTGRARQGSIRAPHFTGGGISHGPKPRDYSQR.

It belongs to the universal ribosomal protein uL4 family. Part of the 50S ribosomal subunit.

One of the primary rRNA binding proteins, this protein initially binds near the 5'-end of the 23S rRNA. It is important during the early stages of 50S assembly. It makes multiple contacts with different domains of the 23S rRNA in the assembled 50S subunit and ribosome. Its function is as follows. Forms part of the polypeptide exit tunnel. This chain is Large ribosomal subunit protein uL4, found in Corynebacterium diphtheriae (strain ATCC 700971 / NCTC 13129 / Biotype gravis).